Reading from the N-terminus, the 170-residue chain is Copper transporter 1 (170 aa).

Residues methionine 1 to methionine 29 form a disordered region. The segment covering methionine 9–methionine 29 has biased composition (low complexity). 2 helical membrane passes run glycine 65–alanine 85 and isoleucine 114–valine 134.

It belongs to the copper transporter (Ctr) (TC 1.A.56) family. SLC31A subfamily. As to expression, expressed in the root apex, lateral root primordia, embryo, trichomes, guard cells and pollen grains.

Its subcellular location is the membrane. In terms of biological role, copper transporter involved in copper acquisition and transport in leaves. Required for copper homeostasis and normal plant growth and development. This is Copper transporter 1 (COPT1) from Arabidopsis thaliana (Mouse-ear cress).